A 489-amino-acid polypeptide reads, in one-letter code: Inactive receptor-like serine/threonine-protein kinase At2g40270 (489 aa).

Positions 1 to 23 are cleaved as a signal peptide; sequence MLFKMRSFVAFVLLLSWFGSCCS. The Extracellular portion of the chain corresponds to 24-139; the sequence is LKDQAVDFLK…PRNSHSSVPL (116 aa). The interval 67 to 130 is disordered; the sequence is KDLPSRKDRK…SAPLANSPIP (64 aa). Residues 81–90 are compositionally biased toward low complexity; sequence AATTTPSSSP. Over residues 99 to 116 the composition is skewed to polar residues; sequence TKASTVSEPQKRSSTQDV. Low complexity predominate over residues 117–130; it reads SPSPSAPLANSPIP. Residues 140–160 traverse the membrane as a helical segment; it reads VVGCVGGAFFLLLVATGLYFF. Over 161 to 489 the chain is Cytoplasmic; that stretch reads TSKAGKTVNP…WAELEVLSTA (329 aa). Positions 200 to 460 constitute a Protein kinase domain; it reads EDFSNVIGSC…PTMQEVTGWL (261 aa).

This sequence belongs to the protein kinase superfamily. Ser/Thr protein kinase family.

Its subcellular location is the cell membrane. The polypeptide is Inactive receptor-like serine/threonine-protein kinase At2g40270 (Arabidopsis thaliana (Mouse-ear cress)).